We begin with the raw amino-acid sequence, 67 residues long: ATP synthase F(0) complex subunit 8 (67 aa).

A helical transmembrane segment spans residues 8–24 (TWFTTIVAMILSLFILM). K54 is modified (N6-acetyllysine; alternate). Position 54 is an N6-succinyllysine; alternate (K54). The residue at position 57 (K57) is an N6-acetyllysine.

The protein belongs to the ATPase protein 8 family. Component of the ATP synthase complex composed at least of ATP5F1A/subunit alpha, ATP5F1B/subunit beta, ATP5MC1/subunit c (homooctomer), MT-ATP6/subunit a, MT-ATP8/subunit 8, ATP5ME/subunit e, ATP5MF/subunit f, ATP5MG/subunit g, ATP5MK/subunit k, ATP5MJ/subunit j, ATP5F1C/subunit gamma, ATP5F1D/subunit delta, ATP5F1E/subunit epsilon, ATP5PF/subunit F6, ATP5PB/subunit b, ATP5PD/subunit d, ATP5PO/subunit OSCP. ATP synthase complex consists of a soluble F(1) head domain (subunits alpha(3) and beta(3)) - the catalytic core - and a membrane F(0) domain - the membrane proton channel (subunits c, a, 8, e, f, g, k and j). These two domains are linked by a central stalk (subunits gamma, delta, and epsilon) rotating inside the F1 region and a stationary peripheral stalk (subunits F6, b, d, and OSCP). Interacts with PRICKLE3.

Its subcellular location is the mitochondrion membrane. Functionally, subunit 8, of the mitochondrial membrane ATP synthase complex (F(1)F(0) ATP synthase or Complex V) that produces ATP from ADP in the presence of a proton gradient across the membrane which is generated by electron transport complexes of the respiratory chain. ATP synthase complex consist of a soluble F(1) head domain - the catalytic core - and a membrane F(1) domain - the membrane proton channel. These two domains are linked by a central stalk rotating inside the F(1) region and a stationary peripheral stalk. During catalysis, ATP synthesis in the catalytic domain of F(1) is coupled via a rotary mechanism of the central stalk subunits to proton translocation. In vivo, can only synthesize ATP although its ATP hydrolase activity can be activated artificially in vitro. Part of the complex F(0) domain. The chain is ATP synthase F(0) complex subunit 8 from Oryctolagus cuniculus (Rabbit).